A 164-amino-acid chain; its full sequence is Prolyl-tRNA editing protein ProX (164 aa).

This sequence belongs to the PRORSD1 family.

Its subcellular location is the cytoplasm. Functions in trans to edit the amino acid moiety from incorrectly charged Ala-tRNA(Pro). Has weak activity on correctly charged tRNA(Ala), tRNA(Gly) as well as tRNA(Cys), tRNA(Met), tRNA(Pro), tRNA(Ser) and tRNA(Leu). The polypeptide is Prolyl-tRNA editing protein ProX (proX) (Acetoanaerobium sticklandii (strain ATCC 12662 / DSM 519 / JCM 1433 / CCUG 9281 / NCIMB 10654 / HF) (Clostridium sticklandii)).